Consider the following 114-residue polypeptide: Large ribosomal subunit protein uL18 (114 aa).

The protein belongs to the universal ribosomal protein uL18 family. Part of the 50S ribosomal subunit; part of the 5S rRNA/L5/L18/L25 subcomplex. Contacts the 5S and 23S rRNAs.

Functionally, this is one of the proteins that bind and probably mediate the attachment of the 5S RNA into the large ribosomal subunit, where it forms part of the central protuberance. In Porphyromonas gingivalis (strain ATCC BAA-308 / W83), this protein is Large ribosomal subunit protein uL18.